The chain runs to 451 residues: tRNA-2-methylthio-N(6)-dimethylallyladenosine synthase (451 aa).

An MTTase N-terminal domain is found at 6–122 (RRYHIITFGC…LDQLLEQVWA (117 aa)). [4Fe-4S] cluster contacts are provided by Cys15, Cys51, Cys85, Cys157, Cys161, and Cys164. The Radical SAM core domain maps to 143 to 384 (RESTVSAWVN…STQAMERSQR (242 aa)). Residues 383–447 (QRYLGRVEEV…AFSLTGEALS (65 aa)) enclose the TRAM domain.

Belongs to the methylthiotransferase family. MiaB subfamily. In terms of assembly, monomer. Requires [4Fe-4S] cluster as cofactor.

The protein localises to the cytoplasm. The enzyme catalyses N(6)-dimethylallyladenosine(37) in tRNA + (sulfur carrier)-SH + AH2 + 2 S-adenosyl-L-methionine = 2-methylsulfanyl-N(6)-dimethylallyladenosine(37) in tRNA + (sulfur carrier)-H + 5'-deoxyadenosine + L-methionine + A + S-adenosyl-L-homocysteine + 2 H(+). In terms of biological role, catalyzes the methylthiolation of N6-(dimethylallyl)adenosine (i(6)A), leading to the formation of 2-methylthio-N6-(dimethylallyl)adenosine (ms(2)i(6)A) at position 37 in tRNAs that read codons beginning with uridine. The sequence is that of tRNA-2-methylthio-N(6)-dimethylallyladenosine synthase from Synechocystis sp. (strain ATCC 27184 / PCC 6803 / Kazusa).